A 1067-amino-acid chain; its full sequence is Tricorn protease homolog 1 (1067 aa).

Positions 518-551 are disordered; it reads TTPSPFGPQRHGRPFETPDREETPDSEGTPTTRI. A compositionally biased stretch (basic and acidic residues) spans 530-540; it reads RPFETPDREET. The Charge relay system role is filled by His740. The interval 754-851 is PDZ-like; that stretch reads RQGLLGADLS…HAVVVPLADE (98 aa). Residue Gly914 participates in substrate binding. Ser961 functions as the Nucleophile in the catalytic mechanism. Catalysis depends on Glu1019, which acts as the Charge relay system.

This sequence belongs to the peptidase S41B family. In terms of assembly, forms a homohexameric complex; it is not known if it assembles into higher-order structures.

The protein resides in the cytoplasm. Its activity is regulated as follows. Stimulated by MgCl2. Functionally, degrades oligopeptides in a sequential manner. The sequence is that of Tricorn protease homolog 1 (tri1) from Streptomyces coelicolor (strain ATCC BAA-471 / A3(2) / M145).